The sequence spans 107 residues: NADH-quinone oxidoreductase subunit K (107 aa).

3 consecutive transmembrane segments (helical) span residues 9 to 29 (IGVN…MFAV), 36 to 56 (IVIL…FLTF), and 68 to 88 (FSLF…AIVI).

Belongs to the complex I subunit 4L family. In terms of assembly, NDH-1 is composed of 14 different subunits. Subunits NuoA, H, J, K, L, M, N constitute the membrane sector of the complex.

It localises to the cell inner membrane. It catalyses the reaction a quinone + NADH + 5 H(+)(in) = a quinol + NAD(+) + 4 H(+)(out). NDH-1 shuttles electrons from NADH, via FMN and iron-sulfur (Fe-S) centers, to quinones in the respiratory chain. The immediate electron acceptor for the enzyme in this species is believed to be a menaquinone. Couples the redox reaction to proton translocation (for every two electrons transferred, four hydrogen ions are translocated across the cytoplasmic membrane), and thus conserves the redox energy in a proton gradient. This is NADH-quinone oxidoreductase subunit K from Chlorobaculum tepidum (strain ATCC 49652 / DSM 12025 / NBRC 103806 / TLS) (Chlorobium tepidum).